Reading from the N-terminus, the 202-residue chain is MDYLPVLFSLLLVVFQGAPEAAVLGAELSTGPDSGGEKPAPSAPWRPRRSKRCSCSSLLDKECVYFCHLDIIWVNTPEHIVPYGLGSPSRSKRSLKDLFATKATDHRNRCQCASQKDKKCWTFCQVRKELRGQDSMEKGWDDQKKGKDCSELGEKCTHHQLVAGRKIRRLDAVRNSIKTAFRVAKLKAEIYREKKVTHNRTH.

A signal peptide spans 1–25; sequence MDYLPVLFSLLLVVFQGAPEAAVLG. Residues 26-50 constitute a propeptide that is removed on maturation; it reads AELSTGPDSGGEKPAPSAPWRPRRS. The interval 28–48 is disordered; that stretch reads LSTGPDSGGEKPAPSAPWRPR. Cystine bridges form between cysteine 53-cysteine 67 and cysteine 55-cysteine 63. Positions 74-202 are excised as a propeptide; it reads VNTPEHIVPY…EKKVTHNRTH (129 aa). The endothelin-like stretch occupies residues 110–124; sequence CQCASQKDKKCWTFC.

The protein belongs to the endothelin/sarafotoxin family.

Its subcellular location is the secreted. Functionally, endothelins are endothelium-derived vasoconstrictor peptides. Probable ligand for G-protein coupled receptors EDNRA and EDNRB which activates PTK2B, BCAR1, BCAR3 and, GTPases RAP1 and RHOA cascade in glomerular mesangial cells. Also binds the DEAR/FBXW7-AS1 receptor. Promotes mesenteric arterial wall remodeling via activation of ROCK signaling and subsequent colocalization of NFATC3 with F-actin filaments. NFATC3 then translocates to the nucleus where it subsequently promotes the transcription of the smooth muscle hypertrophy and differentiation marker ACTA2. The chain is Endothelin-1 (EDN1) from Felis catus (Cat).